The primary structure comprises 487 residues: b(0,+)-type amino acid transporter 1 (487 aa).

Positions 1-20 are disordered; that stretch reads MEETSLRRRREDEKSTHSTE. The Cytoplasmic portion of the chain corresponds to 1-31; it reads MEETSLRRRREDEKSTHSTELKTTSLQKEVG. S18 is modified (phosphoserine). The helical transmembrane segment at 32–55 threads the bilayer; sequence LLSGICIIVGTIIGSGIFISPKSV. An L-arginine-binding site is contributed by 43–47; sequence IIGSG. At 56 to 62 the chain is on the extracellular side; it reads LANTESV. The chain crosses the membrane as a helical span at residues 63 to 84; that stretch reads GPCLIIWAACGILATLGALCFA. Topologically, residues 85-110 are cytoplasmic; that stretch reads ELGTMITKSGGEYPYLMEAFGPIPAY. A helical membrane pass occupies residues 111 to 137; that stretch reads LFSWTSLIVMKPSSFAIICLSFSEYVC. The Extracellular segment spans residues 138 to 147; it reads AAFYSGCKPP. 2 helical membrane-spanning segments follow: residues 148 to 169 and 170 to 193; these read AVVVKLLAAAAILFITTVNALS and VRLGSYVQNVFTAAKMVIVAIIII. Residues 194-217 are Extracellular-facing; that stretch reads SGLVFLAQGNVKNFQNSFEGTQTS. Residues 218 to 238 form a helical membrane-spanning segment; that stretch reads VGAISLAFYNGLWAYDGWNQL. Position 233 (D233) interacts with L-arginine. The Cytoplasmic portion of the chain corresponds to 239–251; the sequence is NYITEELRNPYRN. The helical transmembrane segment at 252–274 threads the bilayer; the sequence is LPMAIVIGIPLVTVCYILMNIAY. Residues 275–302 lie on the Extracellular side of the membrane; the sequence is FTVMTPTELLQSQAVAVTFGDRVLYPAS. A helical transmembrane segment spans residues 303–325; the sequence is WVVPLFVAFSTIGAANGTCFTAG. Over 326–351 the chain is Cytoplasmic; the sequence is RLIYVAGREGHMLKVLSYISVKRLTP. 2 helical membrane passes run 352–370 and 371–391; these read APALIFYGIIAIIYIIPGD and INSLVNYFSFAAWLFYGMTIL. Residues 392–410 are Cytoplasmic-facing; that stretch reads GLVVMRFTRKDLERPIKVP. The chain crosses the membrane as a helical span at residues 411–431; the sequence is LFIPIIVILVSLFLILAPIIS. Topologically, residues 432–434 are extracellular; that stretch reads EPA. A helical membrane pass occupies residues 435 to 450; the sequence is WEYLYCVLFILSGLIF. At 451 to 487 the chain is on the cytoplasmic side; the sequence is YFLFVYYKFGWAQRISRPVTKHLQMLMEVVPPEKDPE.

The protein belongs to the amino acid-polyamine-organocation (APC) superfamily. Disulfide-linked heterodimer composed of the catalytic light chain subunit SLC7A9 and the heavy chain subunit SLC3A1. The heterodimer is the minimal functional unit. Assembles in heterotetramers (dimers of heterodimers) and higher order oligomers; the oligomerization is mediated by SLC3A1 likely to prevent degradation and facilitate heteromer trafficking to the plasma membrane. Interacts with CAV1. Expressed in the brush border membrane in the kidney (at protein level).

It localises to the apical cell membrane. The catalysed reaction is L-leucine(out) + L-arginine(in) = L-leucine(in) + L-arginine(out). It carries out the reaction L-histidine(out) + L-arginine(in) = L-histidine(in) + L-arginine(out). It catalyses the reaction L-arginine(in) + L-phenylalanine(out) = L-arginine(out) + L-phenylalanine(in). The enzyme catalyses L-cysteine(out) + L-arginine(in) = L-cysteine(in) + L-arginine(out). The catalysed reaction is L-cystine(out) + L-arginine(in) = L-cystine(in) + L-arginine(out). It carries out the reaction L-lysine(out) + L-arginine(in) = L-lysine(in) + L-arginine(out). Associates with SLC3A1 to form a functional transporter complex that mediates the electrogenic exchange between cationic amino acids and neutral amino acids, with a stoichiometry of 1:1. Has system b(0,+)-like activity with high affinity for extracellular cationic amino acids and L-cystine and lower affinity for intracellular neutral amino acids. Substrate exchange is driven by high concentration of intracellular neutral amino acids and the intracellular reduction of L-cystine to L-cysteine. Required for reabsorption of L-cystine and dibasic amino acids across the brush border membrane in renal proximal tubules. This chain is b(0,+)-type amino acid transporter 1 (Slc7a9), found in Mus musculus (Mouse).